The chain runs to 333 residues: Uroporphyrinogen decarboxylase (333 aa).

Residues 21-25 (RQVGR), Asp70, Tyr139, Ser194, and His309 each bind substrate.

The protein belongs to the uroporphyrinogen decarboxylase family. In terms of assembly, homodimer.

It localises to the cytoplasm. The enzyme catalyses uroporphyrinogen III + 4 H(+) = coproporphyrinogen III + 4 CO2. Its pathway is porphyrin-containing compound metabolism; protoporphyrin-IX biosynthesis; coproporphyrinogen-III from 5-aminolevulinate: step 4/4. In terms of biological role, catalyzes the decarboxylation of four acetate groups of uroporphyrinogen-III to yield coproporphyrinogen-III. In Chlamydia abortus (strain DSM 27085 / S26/3) (Chlamydophila abortus), this protein is Uroporphyrinogen decarboxylase.